Here is a 400-residue protein sequence, read N- to C-terminus: Argininosuccinate synthase (400 aa).

Residue 8 to 16 participates in ATP binding; that stretch reads AYSGGLDTS. An L-citrulline-binding site is contributed by Tyr85. Gly115 is a binding site for ATP. L-aspartate-binding residues include Thr117, Asn121, and Asp122. Asn121 contacts L-citrulline. Positions 125, 173, 258, and 270 each coordinate L-citrulline.

It belongs to the argininosuccinate synthase family. Type 1 subfamily. In terms of assembly, homotetramer.

The protein resides in the cytoplasm. It carries out the reaction L-citrulline + L-aspartate + ATP = 2-(N(omega)-L-arginino)succinate + AMP + diphosphate + H(+). Its pathway is amino-acid biosynthesis; L-arginine biosynthesis; L-arginine from L-ornithine and carbamoyl phosphate: step 2/3. This Staphylococcus haemolyticus (strain JCSC1435) protein is Argininosuccinate synthase.